Consider the following 482-residue polypeptide: Tripartite motif-containing protein 10 (482 aa).

Residues 16-61 (CPICQGTLREPVTIDCGHNFCCVCLTRYLEIPCLDPGELPTCPLCK) form an RING-type zinc finger. A B box-type zinc finger spans residues 95 to 136 (EEEDVCLEHREKVYYFCEDDEMQLCVVCREAWEHRHHTVRFL). Residues C100, H103, C122, and H128 each contribute to the Zn(2+) site. In terms of domain architecture, B30.2/SPRY spans 293 to 482 (REMKTFLEKL…GRGSKFSLSS (190 aa)).

Belongs to the TRIM/RBCC family. Interacts with IFNAR1; this interaction prevents association of IFNAR1 with TYK2.

The protein localises to the cytoplasm. Functionally, E3 ligase that plays an essential role in the differentiation and survival of terminal erythroid cells. May directly bind to PTEN and promote its ubiquitination, resulting in its proteasomal degradation and activation of hypertrophic signaling. In addition, plays a role in immune response regulation by repressing the phosphorylation of STAT1 and STAT2 in the interferon/JAK/STAT signaling pathway independent of its E3 ligase activity. Mechanistically, interacts with the intracellular domain of IFNAR1 and thereby inhibits the association of TYK2 and IFNAR1. In Sus scrofa (Pig), this protein is Tripartite motif-containing protein 10 (TRIM10).